A 52-amino-acid polypeptide reads, in one-letter code: DNA-directed RNA polymerase subunit Rpo12 (52 aa).

Zn(2+) contacts are provided by Cys13, Cys30, and Cys33.

It belongs to the archaeal Rpo12/eukaryotic RPC10 RNA polymerase subunit family. In terms of assembly, part of the RNA polymerase complex. It depends on Zn(2+) as a cofactor.

It is found in the cytoplasm. It catalyses the reaction RNA(n) + a ribonucleoside 5'-triphosphate = RNA(n+1) + diphosphate. Its function is as follows. DNA-dependent RNA polymerase (RNAP) catalyzes the transcription of DNA into RNA using the four ribonucleoside triphosphates as substrates. This is DNA-directed RNA polymerase subunit Rpo12 from Pyrobaculum arsenaticum (strain DSM 13514 / JCM 11321 / PZ6).